Here is a 121-residue protein sequence, read N- to C-terminus: Copper transport protein CCH (121 aa).

The residue at position 2 (Ala2) is an N-acetylalanine. The HMA domain occupies 2 to 65; the sequence is AQTVVLKVGM…TVSKTGKKTS (64 aa). Residues Cys13 and Cys16 each coordinate Cu cation. Residues 70–121 form a disordered region; it reads EAEAEPKAEADPKVETVTETKTEAETKTEAKVDAKADVEPKAAEAETKPSQV. Residues 73–121 show a composition bias toward basic and acidic residues; the sequence is AEPKAEADPKVETVTETKTEAETKTEAKVDAKADVEPKAAEAETKPSQV.

It belongs to the ATX1 family. The cofactor is Cu cation. In terms of tissue distribution, expressed in phloem (at protein level).

In terms of biological role, involved in copper homeostasis. Can complement the yeast mutants atx1 and sod1. The protein is Copper transport protein CCH (CCH) of Arabidopsis thaliana (Mouse-ear cress).